We begin with the raw amino-acid sequence, 249 residues long: Early E1A protein (249 aa).

An interaction with RB1 in competition with E2F1 region spans residues 38–46 (MSLHDLFDV). Residues 74 to 131 (SAAESGSGDSGVGEELLPVDLDLKCYEDGLPPSDPETDEATEAEEEAAMPTYVNENEN) form an interaction with UBE2I region. An LXCXE motif, interaction with host RB1 and TMEM173/STING motif is present at residues 96-100 (LKCYE). The segment at 145 to 165 (CRACDFHRGTSGNPEAMCALC) is a zinc-finger region. The tract at residues 180–203 (DAEGESESGSPEDTDFPHPLTATP) is disordered. The span at 181-193 (AEGESESGSPEDT) shows a compositional bias: acidic residues. The PXDLS motif, CTBP-binding motif lies at 238–242 (PLNLS). Residues 244 to 248 (KRPKC) carry the Nuclear localization signal motif.

It belongs to the adenoviridae E1A protein family. As to quaternary structure, interacts with host UBE2I; this interaction interferes with polySUMOylation. Interacts with host RB1; this interaction induces the aberrant dissociation of RB1-E2F1 complex thereby disrupting the activity of RB1 and activating E2F1-regulated genes. Interacts with host ATF7; the interaction enhances ATF7-mediated viral transactivation activity which requires the zinc binding domains of both proteins. Isoform early E1A 32 kDa protein and isoform early E1A 26 kDa protein interact (via N-terminus) with CUL1 and E3 ubiquitin ligase RBX1; these interactions inhibit RBX1-CUL1-dependent elongation reaction of ubiquitin chains and attenuate ubiquitination of SCF(FBXW7) target proteins. Interacts (via PXLXP motif) with host ZMYND11/BS69 (via MYND-type zinc finger); this interaction inhibits E1A mediated transactivation. Interacts with host EP300; this interaction stimulates the acetylation of RB1 by recruiting EP300 and RB1 into a multimeric-protein complex. Interacts with host CTBP1 and CTBP2; this interaction seems to potentiate viral replication. Interacts with host DCAF7. Interacts with host DYRK1A. Interacts with host KPNA4; this interaction allows E1A import into the host nucleus. Interacts with host EP400; this interaction stabilizes MYC. Interacts with host TBP protein; this interaction probably disrupts the TBP-TATA complex. Interacts (via LXCXE motif) with host TMEM173/STING; this interaction impairs the ability of TMEM173/STING to sense cytosolic DNA and promote the production of type I interferon (IFN-alpha and IFN-beta). Interacts (via C-terminus) with host ZBED1/hDREF (via C-terminus); the interaction is direct.

Its subcellular location is the host nucleus. Its function is as follows. Plays a role in viral genome replication by driving entry of quiescent cells into the cell cycle. Stimulation of progression from G1 to S phase allows the virus to efficiently use the cellular DNA replicating machinery to achieve viral genome replication. E1A protein has both transforming and trans-activating activities. Induces the disassembly of the E2F1 transcription factor from RB1 by direct competition for the same binding site on RB1, with subsequent transcriptional activation of E2F1-regulated S-phase genes and of the E2 region of the adenoviral genome. Release of E2F1 leads to the ARF-mediated inhibition of MDM2 and causes TP53/p53 to accumulate because it is not targeted for degradation by MDM2-mediated ubiquitination anymore. This increase in TP53, in turn, would arrest the cell proliferation and direct its death but this effect is counteracted by the viral protein E1B-55K. Inactivation of the ability of RB1 to arrest the cell cycle is critical for cellular transformation, uncontrolled cellular growth and proliferation induced by viral infection. Interaction with RBX1 and CUL1 inhibits ubiquitination of the proteins targeted by SCF(FBXW7) ubiquitin ligase complex, and may be linked to unregulated host cell proliferation. The tumorigenesis-restraining activity of E1A may be related to the disruption of the host CtBP-CtIP complex through the CtBP binding motif. Interaction with host TMEM173/STING impairs the ability of TMEM173/STING to sense cytosolic DNA and promote the production of type I interferon (IFN-alpha and IFN-beta). Promotes the sumoylation of host ZBED1/hDREF with SUMO1. This chain is Early E1A protein, found in Homo sapiens (Human).